Here is a 185-residue protein sequence, read N- to C-terminus: Ribosome-recycling factor (185 aa).

This sequence belongs to the RRF family.

The protein resides in the cytoplasm. Functionally, responsible for the release of ribosomes from messenger RNA at the termination of protein biosynthesis. May increase the efficiency of translation by recycling ribosomes from one round of translation to another. The polypeptide is Ribosome-recycling factor (Vibrio cholerae serotype O1 (strain ATCC 39541 / Classical Ogawa 395 / O395)).